The sequence spans 784 residues: LPS-assembly protein LptD (784 aa).

Residues 1-24 (MKKRIPTLLATMIATALYSQQGLA) form the signal peptide. 2 cysteine pairs are disulfide-bonded: cysteine 31/cysteine 724 and cysteine 173/cysteine 725.

This sequence belongs to the LptD family. Component of the lipopolysaccharide transport and assembly complex. Interacts with LptE and LptA. Post-translationally, contains two intramolecular disulfide bonds.

It localises to the cell outer membrane. Functionally, together with LptE, is involved in the assembly of lipopolysaccharide (LPS) at the surface of the outer membrane. The sequence is that of LPS-assembly protein LptD from Shigella flexneri.